Here is an 82-residue protein sequence, read N- to C-terminus: Small ribosomal subunit protein bS18 (82 aa).

It belongs to the bacterial ribosomal protein bS18 family. Part of the 30S ribosomal subunit. Forms a tight heterodimer with protein bS6.

Its function is as follows. Binds as a heterodimer with protein bS6 to the central domain of the 16S rRNA, where it helps stabilize the platform of the 30S subunit. This Chlamydia felis (strain Fe/C-56) (Chlamydophila felis) protein is Small ribosomal subunit protein bS18.